Consider the following 277-residue polypeptide: S-formylglutathione hydrolase FrmB (277 aa).

Active-site charge relay system residues include Ser145, Asp221, and His254.

This sequence belongs to the esterase D family.

The enzyme catalyses S-formylglutathione + H2O = formate + glutathione + H(+). Its function is as follows. Serine hydrolase involved in the detoxification of formaldehyde. Hydrolyzes S-formylglutathione to glutathione and formate. The sequence is that of S-formylglutathione hydrolase FrmB (frmB) from Escherichia coli (strain K12 / DH10B).